Consider the following 107-residue polypeptide: Urease subunit beta (107 aa).

The protein belongs to the urease beta subunit family. Heterotrimer of UreA (gamma), UreB (beta) and UreC (alpha) subunits. Three heterotrimers associate to form the active enzyme.

The protein resides in the cytoplasm. The enzyme catalyses urea + 2 H2O + H(+) = hydrogencarbonate + 2 NH4(+). It participates in nitrogen metabolism; urea degradation; CO(2) and NH(3) from urea (urease route): step 1/1. The sequence is that of Urease subunit beta from Bacillus sp. (strain TB-90).